Here is a 558-residue protein sequence, read N- to C-terminus: Oligo-1,6-glucosidase (558 aa).

Ca(2+) contacts are provided by aspartate 21, asparagine 23, aspartate 25, and aspartate 29. Catalysis depends on aspartate 199, which acts as the Nucleophile. Residue glutamate 255 is the Proton donor of the active site.

This sequence belongs to the glycosyl hydrolase 13 family.

It is found in the cytoplasm. It catalyses the reaction Hydrolysis of (1-&gt;6)-alpha-D-glucosidic linkages in some oligosaccharides produced from starch and glycogen by alpha-amylase, and in isomaltose.. The sequence is that of Oligo-1,6-glucosidase (malL) from Bacillus cereus.